Here is a 162-residue protein sequence, read N- to C-terminus: MEIFIENIQDKIEITDEILELMEKAIKMCLEHEKFEYPYEVSIILTDNEKIREINYEQRNIDKPTDVLSFPIVDMYDGVIKSSQGDFDLDEGRIILGDILISMEKAKEQSMEYGHSFERELIFLLTHGVFHLLGYDHDTPEREKKMFEKQEAILKSLNLERN.

Residues His127, His131, and His137 each contribute to the Zn(2+) site.

The protein belongs to the endoribonuclease YbeY family. Requires Zn(2+) as cofactor.

It is found in the cytoplasm. Single strand-specific metallo-endoribonuclease involved in late-stage 70S ribosome quality control and in maturation of the 3' terminus of the 16S rRNA. The protein is Endoribonuclease YbeY of Acetivibrio thermocellus (strain ATCC 27405 / DSM 1237 / JCM 9322 / NBRC 103400 / NCIMB 10682 / NRRL B-4536 / VPI 7372) (Clostridium thermocellum).